Here is a 337-residue protein sequence, read N- to C-terminus: D-alanine--D-alanine ligase (337 aa).

The ATP-grasp domain occupies 124 to 330 (KMWFSALGIP…FTEYLSLVIN (207 aa)). 154–209 (ALANWGSIFIKAASQGSSVGCYKVDDSSKVAQVLKDAFGYAPYVVVEKTIKARELE) contributes to the ATP binding site. The Mg(2+) site is built by Asp284, Glu297, and Asn299.

Belongs to the D-alanine--D-alanine ligase family. It depends on Mg(2+) as a cofactor. Requires Mn(2+) as cofactor.

The protein localises to the cytoplasm. It catalyses the reaction 2 D-alanine + ATP = D-alanyl-D-alanine + ADP + phosphate + H(+). It participates in cell wall biogenesis; peptidoglycan biosynthesis. In terms of biological role, cell wall formation. The protein is D-alanine--D-alanine ligase of Shewanella sp. (strain W3-18-1).